A 137-amino-acid polypeptide reads, in one-letter code: Peptide methionine sulfoxide reductase MsrB (137 aa).

The disordered stretch occupies residues 1–33 (MSNNQDRPGQITDESLRERLSPEAYAVTRRAGT). Residues 13-135 (DESLRERLSP…NSLSLDFKAA (123 aa)) enclose the MsrB domain. Zn(2+)-binding residues include Cys52, Cys55, Cys101, and Cys104. Residue Cys124 is the Nucleophile of the active site.

It belongs to the MsrB Met sulfoxide reductase family. Requires Zn(2+) as cofactor.

The enzyme catalyses L-methionyl-[protein] + [thioredoxin]-disulfide + H2O = L-methionyl-(R)-S-oxide-[protein] + [thioredoxin]-dithiol. The chain is Peptide methionine sulfoxide reductase MsrB from Thioalkalivibrio sulfidiphilus (strain HL-EbGR7).